The chain runs to 177 residues: MQQRGVTIWLTGLSGAGKTTITHALEKKLRDSGYRLEVLDGDVVRTNLTKGLGFSKEDRDTNIRRIGFVSHLLTRNGVIVLVSAISPYAAIRQEVKHTIGDFLEVFVNAPLAVCEERDVKGLYAKARSGEIKGFTGIDDPYEPPTNPDVECRTDLEELDESVGKIWQKLVDLKYIEG.

12–19 provides a ligand contact to ATP; it reads GLSGAGKT. Residue serine 86 is the Phosphoserine intermediate of the active site.

It belongs to the APS kinase family.

The catalysed reaction is adenosine 5'-phosphosulfate + ATP = 3'-phosphoadenylyl sulfate + ADP + H(+). It participates in sulfur metabolism; hydrogen sulfide biosynthesis; sulfite from sulfate: step 2/3. Its function is as follows. Catalyzes the synthesis of activated sulfate. This is Probable adenylyl-sulfate kinase (cysC) from Synechocystis sp. (strain ATCC 27184 / PCC 6803 / Kazusa).